The chain runs to 234 residues: UPF0758 protein Smal_0281 (234 aa).

Residues Val103 to Leu225 enclose the MPN domain. Zn(2+)-binding residues include His174, His176, and Asp187. The JAMM motif signature appears at His174–Asp187.

Belongs to the UPF0758 family.

This chain is UPF0758 protein Smal_0281, found in Stenotrophomonas maltophilia (strain R551-3).